Here is a 101-residue protein sequence, read N- to C-terminus: Feather keratin Cos1-1/Cos1-3/Cos2-1 (101 aa).

Serine 2 is modified (N-acetylserine).

It belongs to the avian keratin family. In terms of assembly, the avian keratins (F-ker, S-ker, C-ker and B-ker) are a complex mixture of very similar polypeptides.

The protein is Feather keratin Cos1-1/Cos1-3/Cos2-1 of Columba livia (Rock dove).